Reading from the N-terminus, the 80-residue chain is Homeobox protein 7 (80 aa).

Positions S8–S67 form a DNA-binding region, homeobox. The disordered stretch occupies residues R60–K80. The segment covering N70–K80 has biased composition (low complexity).

The protein localises to the nucleus. Putative transcription factor. This is Homeobox protein 7 (hbx7) from Dictyostelium discoideum (Social amoeba).